A 202-amino-acid polypeptide reads, in one-letter code: MLDLLKVSITGDLSSGKTEACRVFQDLGAYVISADKVSHSFLVPHSHIGHRVIDLLGSDVVVDNAFDRKVIAEKVFDNLVLLQALEAILHPEVCRIIEEQYCLVAKENKYPLFIAEVPLLYEIQYANKFDRVILITADENTRRERFTRKTNCSDLNFYQRCARFSSNEEKMMHADIIIENNGTKEELRHKVEEYFYALKGAL.

The region spanning 6–202 is the DPCK domain; that stretch reads KVSITGDLSS…EYFYALKGAL (197 aa). Residue 14–19 coordinates ATP; sequence SSGKTE.

The protein belongs to the CoaE family.

The protein localises to the cytoplasm. It carries out the reaction 3'-dephospho-CoA + ATP = ADP + CoA + H(+). It participates in cofactor biosynthesis; coenzyme A biosynthesis; CoA from (R)-pantothenate: step 5/5. Catalyzes the phosphorylation of the 3'-hydroxyl group of dephosphocoenzyme A to form coenzyme A. This Chlamydia felis (strain Fe/C-56) (Chlamydophila felis) protein is Dephospho-CoA kinase.